Reading from the N-terminus, the 410-residue chain is Translation initiation factor 2 subunit gamma (410 aa).

In terms of domain architecture, tr-type G spans 6–203 (QSEVNIGMVG…AIQEFIPTPE (198 aa)). Residues 15–22 (GHVDHGKT) form a G1 region. 4 residues coordinate Mg(2+): Asp-18, Thr-22, Gly-43, and Ser-45. A GTP-binding site is contributed by 18 to 23 (DHGKTS). Residues 43–47 (GISIR) are G2. 4 residues coordinate Zn(2+): Cys-58, Cys-61, Cys-73, and Cys-76. The segment at 90-93 (DAPG) is G3. GTP contacts are provided by residues 146 to 149 (NKID) and 181 to 183 (SAH). The tract at residues 146 to 149 (NKID) is G4. The interval 181 to 183 (SAH) is G5.

This sequence belongs to the TRAFAC class translation factor GTPase superfamily. Classic translation factor GTPase family. EIF2G subfamily. In terms of assembly, heterotrimer composed of an alpha, a beta and a gamma chain. Requires Mg(2+) as cofactor.

It carries out the reaction GTP + H2O = GDP + phosphate + H(+). Its function is as follows. eIF-2 functions in the early steps of protein synthesis by forming a ternary complex with GTP and initiator tRNA. The chain is Translation initiation factor 2 subunit gamma from Methanococcus maripaludis (strain C7 / ATCC BAA-1331).